Consider the following 234-residue polypeptide: Large ribosomal subunit protein uL1 (234 aa).

Belongs to the universal ribosomal protein uL1 family. Part of the 50S ribosomal subunit.

Functionally, binds directly to 23S rRNA. The L1 stalk is quite mobile in the ribosome, and is involved in E site tRNA release. Its function is as follows. Protein L1 is also a translational repressor protein, it controls the translation of the L11 operon by binding to its mRNA. The polypeptide is Large ribosomal subunit protein uL1 (Klebsiella pneumoniae subsp. pneumoniae (strain ATCC 700721 / MGH 78578)).